The chain runs to 378 residues: Inner membrane protein YibH (378 aa).

Over 1-3 (MDL) the chain is Periplasmic. A helical membrane pass occupies residues 4 to 24 (LIVLTYVALAWAVFKIFRIPV). At 25 to 26 (NQ) the chain is on the cytoplasmic side. The chain crosses the membrane as a helical span at residues 27–47 (WTLATAALGGVFLVSGLILLM). At 48-54 (NYNHPYT) the chain is on the periplasmic side. Residues 55–75 (FTAQKAVIAIPITPQVTGIVT) form a helical membrane-spanning segment. Over 76-232 (EVTDKNNQLI…RAPSNGYVTQ (157 aa)) the chain is Cytoplasmic. A helical membrane pass occupies residues 233-253 (VLIRPGTYAAALPLRPVMVFI). Residues 254 to 280 (PEQKRQIVAQFRQNSLLRLKPGDDAEV) lie on the Periplasmic side of the membrane. A helical membrane pass occupies residues 281–301 (VFNALPGQVFHGKLTSILPVV). Residues 302–309 (PGGSYQAQ) are Cytoplasmic-facing. A helical membrane pass occupies residues 310-330 (GVLQSLTVVPGTDGVLGTIEL). Topologically, residues 331 to 378 (DPNDDIDALPDGIYAQVAVYSDHFSHVSVMRKVLLRMTSWMHYLYLDH) are periplasmic.

This sequence belongs to the membrane fusion protein (MFP) (TC 8.A.1) family.

The protein resides in the cell inner membrane. This is Inner membrane protein YibH (yibH) from Escherichia coli O157:H7.